The chain runs to 210 residues: MTNLNYQQTHFVMSAPDIRHLPSDTGIEVAFAGRSNAGKSSALNTLTNQKSLARTSKTPGRTQLINLFEVADGKRLVDLPGYGYAEVPEEMKRKWQRALGEYLEKRQSLQGLVVLMDIRHPLKDLDQQMIEWAVDSNIAVLVLLTKTDKLASGARKAQLNMVREAVLAFNGDVQVETFSSLKKQGVDKLRQKLDTWFSEMQPVEETQDGE.

Residues 25 to 199 form the EngB-type G domain; it reads TGIEVAFAGR…RQKLDTWFSE (175 aa). GTP is bound by residues 33 to 40, 60 to 64, 78 to 81, 145 to 148, and 178 to 180; these read GRSNAGKS, GRTQL, DLPG, TKTD, and FSS. Mg(2+) is bound by residues Ser40 and Thr62.

The protein belongs to the TRAFAC class TrmE-Era-EngA-EngB-Septin-like GTPase superfamily. EngB GTPase family. The cofactor is Mg(2+).

Its function is as follows. Necessary for normal cell division and for the maintenance of normal septation. This Escherichia coli O6:K15:H31 (strain 536 / UPEC) protein is Probable GTP-binding protein EngB.